We begin with the raw amino-acid sequence, 548 residues long: DNA-binding protein REPIN1 (548 aa).

Residues 1–47 (MLERRCRGPTAMGPAHPWLFSGPSQESSQPNRGLRYQGKSVAQPGGP) form a disordered region. Over residues 22 to 31 (GPSQESSQPN) the composition is skewed to polar residues. Position 27 is a phosphoserine (serine 27). At lysine 39 the chain carries N6-acetyllysine. Residues 53-75 (HRCAHCRKRFPGWVALWLHTRRC) form a C2H2-type 1; atypical zinc finger. 2 consecutive C2H2-type zinc fingers follow at residues 81 to 103 (LPCH…LQVH) and 112 to 134 (FICH…LRAH). A C2H2-type 4; atypical zinc finger spans residues 141–163 (ITCPECNKRFWRQKQLRAHLRRC). C2H2-type zinc fingers lie at residues 173–195 (FICG…KRVH), 232–254 (FQCA…RRVH), 260–282 (HQCP…RRIH), 288–310 (YPCT…SKIH), 356–378 (HSCT…QRQH), 384–406 (FTCT…SRVH), 412–434 (FACE…RRDH), 440–462 (FVCP…RRIH), 468–490 (YVCP…RRIH), 496–518 (YACP…RKSH), and 524–546 (FCCA…QKKH). Lysine 272 bears the N6-acetyllysine mark.

Homodimers and homomultimers. Found in a complex with RIP60 and RIP100. Expressed in the liver and in subcutaneous and visceral adipose tissue.

The protein localises to the nucleus. It is found in the cytoplasm. Its subcellular location is the cytosol. Its function is as follows. Sequence-specific double-stranded DNA-binding protein. Binds ATT-rich and T-rich DNA sequences and facilitates DNA bending. May regulate the expression of genes involved in cellular fatty acid import, including SCARB1/CD36, and genes involved in lipid droplet formation. May regulate the expression of LCN2, and thereby influence iron metabolism and apoptosis-related pathways. May regulate the expression of genes involved in glucose transport. In Rattus norvegicus (Rat), this protein is DNA-binding protein REPIN1 (Repin1).